Here is a 450-residue protein sequence, read N- to C-terminus: UDP-N-acetylmuramoylalanine--D-glutamate ligase (450 aa).

119-125 (GSNGKTT) is an ATP binding site.

This sequence belongs to the MurCDEF family.

It is found in the cytoplasm. It catalyses the reaction UDP-N-acetyl-alpha-D-muramoyl-L-alanine + D-glutamate + ATP = UDP-N-acetyl-alpha-D-muramoyl-L-alanyl-D-glutamate + ADP + phosphate + H(+). It participates in cell wall biogenesis; peptidoglycan biosynthesis. Cell wall formation. Catalyzes the addition of glutamate to the nucleotide precursor UDP-N-acetylmuramoyl-L-alanine (UMA). In Bacillus cereus (strain G9842), this protein is UDP-N-acetylmuramoylalanine--D-glutamate ligase.